The sequence spans 100 residues: Elicitin Vex2 (100 aa).

3 disulfides stabilise this stretch: C3/C71, C27/C56, and C51/C95.

Belongs to the elicitin family.

It is found in the secreted. Its function is as follows. Induces local and distal defense responses (incompatible hypersensitive reaction) in plants from the solanaceae and cruciferae families. Elicits leaf necrosis and causes the accumulation of pathogenesis-related proteins. Might interact with the lipidic molecules of the plasma membrane. The chain is Elicitin Vex2 from Phytopythium vexans (Damping-off fungus).